The following is a 446-amino-acid chain: C4-dicarboxylate transport protein (446 aa).

9 helical membrane-spanning segments follow: residues 20–40, 56–76, 91–111, 160–180, 200–220, 233–253, 319–339, 344–364, and 367–387; these read HLYV…HFYP, LVKM…IAGM, IYFL…ANVV, GDIL…AGVG, LVHI…AFTI, FLIL…LGLV, IYMT…LSLG, LLLV…AGFI, and AATL…ILGI.

This sequence belongs to the dicarboxylate/amino acid:cation symporter (DAACS) (TC 2.A.23) family.

It localises to the cell inner membrane. Its function is as follows. Responsible for the transport of dicarboxylates such as succinate, fumarate, and malate from the periplasm across the membrane. The sequence is that of C4-dicarboxylate transport protein from Azorhizobium caulinodans (strain ATCC 43989 / DSM 5975 / JCM 20966 / LMG 6465 / NBRC 14845 / NCIMB 13405 / ORS 571).